A 584-amino-acid polypeptide reads, in one-letter code: MLSLTMLLLERVGLIIILAYVLMNIPYFKNLMNRRRTWKARWQLCIIFSLFALMSNLTGIVIDHQHSLSGSVYFRLDDDVSLANTRVLTIGVAGLVGGPFVGLFVGVISGIFRVYMGGADAQVYLISSIFIGIIAGYFGLQAQRRKRYPSIAKSAMIGIVMEMIQMLSILTFSHDKAYAVDLISLIALPMIIVNSVGTAIFMSIIISTLKQEEQMKAVQTHDVLQLMNQTLPYFKEGLNRESAQQIAMIIKNLMKVSAVAITSKNEILSHVGAGSDHHIPTNEILTSLSKDVLKSGKLKEVHTKEEIGCSHPNCPLRAAIVIPLEMHGSIVGTLKMYFTNPNDLTFVERQLAEGLANIFSSQIELGEAETQSKLLKDAEIKSLQAQVSPHFFFNSINTISALVRINSEKARELLLELSYFFRANLQGSKQHTITLDKELSQVRAYLSLEQARYPGRFNININVEDKYRDVLVPPFLIQILVENAIKHAFTNRKQGNDIDVSVIKETATHVRIIVQDNGQGISKDKMHLLGETSVESESGTGSALENLNLRLKGLFGKSAALQFESTSSGTTFWCVLPYERQEEE.

6 helical membrane-spanning segments follow: residues 2-22 (LSLT…AYVL), 42-62 (WQLC…GIVI), 92-112 (VAGL…SGIF), 121-141 (AQVY…FGLQ), 154-174 (SAMI…TFSH), and 186-206 (IALP…SIII). Residues 311–363 (HPNCPLRAAIVIPLEMHGSIVGTLKMYFTNPNDLTFVERQLAEGLANIFSSQI) form the GAF domain. The Histidine kinase domain maps to 379-461 (EIKSLQAQVS…RYPGRFNINI (83 aa)). Histidine 390 is subject to Phosphohistidine; by autocatalysis.

Post-translationally, autophosphorylated on His-390.

The protein localises to the cell membrane. The enzyme catalyses ATP + protein L-histidine = ADP + protein N-phospho-L-histidine.. In terms of biological role, member of the two-component regulatory system LytR/LytS that regulates genes involved in autolysis, programmed cell death, biofilm formation and cell wall metabolism. Also participates in sensing and responding to host defense cationic antimicrobial peptides (HDPs). Functions as a sensor protein kinase which is autophosphorylated at a histidine residue and transfers its phosphate group to the conserved aspartic acid residue in the regulatory domain of LytR. In turn, LytR binds to the upstream promoter regions of target genes including lrgA and lrgB, to positively regulate their expression. Also possesses a phosphatase activity that dephosphorylates and thus inactivates LytR. In Staphylococcus aureus (strain USA300), this protein is Sensor histidine kinase/phosphatase LytS (lytS).